The chain runs to 156 residues: Small ribosomal subunit protein uS7 (156 aa).

This sequence belongs to the universal ribosomal protein uS7 family. As to quaternary structure, part of the 30S ribosomal subunit. Contacts proteins S9 and S11.

Functionally, one of the primary rRNA binding proteins, it binds directly to 16S rRNA where it nucleates assembly of the head domain of the 30S subunit. Is located at the subunit interface close to the decoding center, probably blocks exit of the E-site tRNA. In Lachnospira eligens (strain ATCC 27750 / DSM 3376 / VPI C15-48 / C15-B4) (Eubacterium eligens), this protein is Small ribosomal subunit protein uS7.